Consider the following 301-residue polypeptide: Envoplakin-like protein (301 aa).

Residues 1–88 are a coiled coil; that stretch reads MQASADQVER…ERVTQECAEY (88 aa). Disordered stretches follow at residues 18 to 41 and 118 to 166; these read RLQQDRLNSEQSQALQHQQETGSS and GLRR…PEPI. The segment covering 26-41 has biased composition (polar residues); it reads SEQSQALQHQQETGSS. The span at 136–151 shows a compositional bias: basic and acidic residues; the sequence is GAQHRAEGDQRPRRAA.

Belongs to the plakin or cytolinker family.

The protein is Envoplakin-like protein (EVPLL) of Homo sapiens (Human).